Consider the following 144-residue polypeptide: Interleukin-3 (144 aa).

Residues 1–17 (MSSLSILHLLLLLLALH) form the signal peptide.

Belongs to the IL-3 family. Monomer.

The protein localises to the secreted. In terms of biological role, granulocyte/macrophage colony-stimulating factors are cytokines that act in hematopoiesis by controlling the production, differentiation, and function of 2 related white cell populations of the blood, the granulocytes and the monocytes-macrophages. Functionally, this CSF induces granulocytes, macrophages, mast cells, stem cells, erythroid cells, eosinophils and megakaryocytes. The polypeptide is Interleukin-3 (IL3) (Bos taurus (Bovine)).